Here is a 457-residue protein sequence, read N- to C-terminus: Serine--tRNA ligase (457 aa).

252–254 (TAE) lines the L-serine pocket. ATP-binding positions include 283–285 (RKE) and Val299. Residue Glu306 coordinates L-serine. 370-373 (EMVS) is a binding site for ATP. Thr406 provides a ligand contact to L-serine.

The protein belongs to the class-II aminoacyl-tRNA synthetase family. Type-1 seryl-tRNA synthetase subfamily. As to quaternary structure, homodimer. The tRNA molecule binds across the dimer.

The protein resides in the cytoplasm. It carries out the reaction tRNA(Ser) + L-serine + ATP = L-seryl-tRNA(Ser) + AMP + diphosphate + H(+). The enzyme catalyses tRNA(Sec) + L-serine + ATP = L-seryl-tRNA(Sec) + AMP + diphosphate + H(+). It participates in aminoacyl-tRNA biosynthesis; selenocysteinyl-tRNA(Sec) biosynthesis; L-seryl-tRNA(Sec) from L-serine and tRNA(Sec): step 1/1. Its function is as follows. Catalyzes the attachment of serine to tRNA(Ser). Is also able to aminoacylate tRNA(Sec) with serine, to form the misacylated tRNA L-seryl-tRNA(Sec), which will be further converted into selenocysteinyl-tRNA(Sec). The protein is Serine--tRNA ligase of Saccharolobus islandicus (strain M.14.25 / Kamchatka #1) (Sulfolobus islandicus).